The following is a 517-amino-acid chain: Putative transporter C543.05c (517 aa).

The next 11 helical transmembrane spans lie at 68-88 (SFGVNEVLLASVLGSVVFALL), 93-113 (LCIVGVTGPITVFNYTVYDIM), 121-141 (FPFLCWICLWSMIFHFIIAIA), 155-175 (CEIFGLYVAFIYLEKGVQVLC), 186-206 (FLSITIALLFLMVGWLCDTVG), 217-237 (ILLLDYGLVASIIFFSGFQHI), 269-289 (IPVGDVFLAIPFSIVLTILFY), 311-331 (GFHWDFFLLGITTGVSGILGI), 377-397 (SNFIQGLMTVGTMTGPLLLVL), 403-423 (CVLAGLFWVMGFSAIFGNGIT), and 449-471 (RVVWLYTILQLIGFGATFAITQV).

Belongs to the anion exchanger (TC 2.A.31) family.

Its subcellular location is the vacuole membrane. This chain is Putative transporter C543.05c, found in Schizosaccharomyces pombe (strain 972 / ATCC 24843) (Fission yeast).